The chain runs to 162 residues: Cytochrome c-type biogenesis protein CcmE (162 aa).

Over 1-7 the chain is Cytoplasmic; sequence MTRKQRR. Residues 8-28 traverse the membrane as a helical; Signal-anchor for type II membrane protein segment; it reads LTMIGGALVVLGIAAALVLNA. At 29–162 the chain is on the periplasmic side; the sequence is LRDSIVFFST…EASSKQEVSQ (134 aa). Heme contacts are provided by histidine 122 and tyrosine 126. The disordered stretch occupies residues 140 to 162; sequence HWKDDYGAQPGAAEASSKQEVSQ.

Belongs to the CcmE/CycJ family.

It is found in the cell inner membrane. Heme chaperone required for the biogenesis of c-type cytochromes. Transiently binds heme delivered by CcmC and transfers the heme to apo-cytochromes in a process facilitated by CcmF and CcmH. The sequence is that of Cytochrome c-type biogenesis protein CcmE from Nitrobacter winogradskyi (strain ATCC 25391 / DSM 10237 / CIP 104748 / NCIMB 11846 / Nb-255).